The chain runs to 626 residues: Extracellular metalloproteinase 1 (626 aa).

An N-terminal signal peptide occupies residues 1 to 17; sequence MLSSLLAGAGLVALAAS. A propeptide spanning residues 18–241 is cleaved from the precursor; the sequence is HPTSHGNALT…IHGVVDYSAD (224 aa). N-linked (GlcNAc...) asparagine glycosylation occurs at Asn-315. Residue His-425 participates in Zn(2+) binding. The active site involves Glu-426. His-429 provides a ligand contact to Zn(2+). A disordered region spans residues 606–626; the sequence is GSGARYSSTARTGSTALPSGC. Residues 610–626 are compositionally biased toward polar residues; sequence RYSSTARTGSTALPSGC.

This sequence belongs to the peptidase M36 family. Requires Zn(2+) as cofactor.

The protein resides in the secreted. Functionally, secreted metalloproteinase that allows assimilation of proteinaceous substrates. The sequence is that of Extracellular metalloproteinase 1 (MEP1) from Phaeosphaeria nodorum (strain SN15 / ATCC MYA-4574 / FGSC 10173) (Glume blotch fungus).